Consider the following 236-residue polypeptide: Phosphoribosylaminoimidazole-succinocarboxamide synthase (236 aa).

This sequence belongs to the SAICAR synthetase family.

It carries out the reaction 5-amino-1-(5-phospho-D-ribosyl)imidazole-4-carboxylate + L-aspartate + ATP = (2S)-2-[5-amino-1-(5-phospho-beta-D-ribosyl)imidazole-4-carboxamido]succinate + ADP + phosphate + 2 H(+). The protein operates within purine metabolism; IMP biosynthesis via de novo pathway; 5-amino-1-(5-phospho-D-ribosyl)imidazole-4-carboxamide from 5-amino-1-(5-phospho-D-ribosyl)imidazole-4-carboxylate: step 1/2. In Pseudomonas putida (strain GB-1), this protein is Phosphoribosylaminoimidazole-succinocarboxamide synthase.